The primary structure comprises 452 residues: Plasminogen-binding protein PgbA (452 aa).

The disordered stretch occupies residues 265–452 (QEAIKEPKKA…RRKALEAGKK (188 aa)). Basic and acidic residues-rich tracts occupy residues 284–310 (LEEK…DERK) and 317–373 (KAME…KEPS). A compositionally biased stretch (polar residues) spans 374-391 (DGNNATQQGEKQNAPKEN). The segment covering 392 to 452 (NAQKEENKPN…RRKALEAGKK (61 aa)) has biased composition (basic and acidic residues).

It is found in the cell surface. In terms of biological role, binds plasminogen, specifically, and in a concentration and lysine-dependent manner. Plasminogen is the precursor of plasmin, a serine protease that cleaves fibrin, fibronectin, laminin and vitronectin. Acquisition of plasminogen/plasmin could enable H.pylori to degrade host components. The polypeptide is Plasminogen-binding protein PgbA (pgbA) (Helicobacter pylori (strain ATCC 700392 / 26695) (Campylobacter pylori)).